The chain runs to 101 residues: Small ribosomal subunit protein bS6 (101 aa).

This sequence belongs to the bacterial ribosomal protein bS6 family.

In terms of biological role, binds together with bS18 to 16S ribosomal RNA. The sequence is that of Small ribosomal subunit protein bS6 from Oleidesulfovibrio alaskensis (strain ATCC BAA-1058 / DSM 17464 / G20) (Desulfovibrio alaskensis).